The following is a 428-amino-acid chain: Chaperone SurA (428 aa).

The first 13 residues, Met1–Ala13, serve as a signal peptide directing secretion. PpiC domains lie at Ser164–Glu265 and Arg276–Gly375.

The protein localises to the periplasm. It catalyses the reaction [protein]-peptidylproline (omega=180) = [protein]-peptidylproline (omega=0). Its function is as follows. Chaperone involved in the correct folding and assembly of outer membrane proteins. Recognizes specific patterns of aromatic residues and the orientation of their side chains, which are found more frequently in integral outer membrane proteins. May act in both early periplasmic and late outer membrane-associated steps of protein maturation. The sequence is that of Chaperone SurA from Pseudomonas syringae pv. tomato (strain ATCC BAA-871 / DC3000).